The primary structure comprises 697 residues: Choline transporter-like protein 2 (697 aa).

The Cytoplasmic portion of the chain corresponds to 1–30; that stretch reads MDMEEKPKYGEPRKFDPSFKGPIQNRGCTD. Residues 31–51 form a helical membrane-spanning segment; it reads IVCCIIFIIAILGYLAVGILA. Residues 52–226 are Extracellular-facing; that stretch reads WTHGDPRKVI…KIFEDYTKSW (175 aa). Residues asparagine 113 and asparagine 204 are each glycosylated (N-linked (GlcNAc...) asparagine). Residues 227-247 form a helical membrane-spanning segment; sequence YWILICLLIAVVLSLIFIVLL. Over 248–249 the chain is Cytoplasmic; the sequence is RF. A helical transmembrane segment spans residues 250-270; the sequence is LAGVMVWVMILMVVAVIAYGI. The Extracellular segment spans residues 271-309; sequence AHCSIKYVSLKDTPGSNITLQQLGFQPDFAVYLHIRQTW. A glycan (N-linked (GlcNAc...) asparagine) is linked at asparagine 287. The chain crosses the membrane as a helical span at residues 310–330; sequence LAFIIILAILELIIILLLIFL. At 331-353 the chain is on the cytoplasmic side; it reads RNRIRVAVELMKEASRAIGYVMS. The chain crosses the membrane as a helical span at residues 354–374; that stretch reads SLVFPIFTFFLLAIVIAFWGV. The Extracellular portion of the chain corresponds to 375-435; it reads NAVFLSTSSE…YGGETPYHKY (61 aa). N-linked (GlcNAc...) asparagine glycosylation is found at asparagine 391 and asparagine 406. Residues 436 to 456 form a helical membrane-spanning segment; the sequence is LILLQFYNVFLFFWCANFVTA. Topologically, residues 457-498 are cytoplasmic; that stretch reads LGQMTLAGAFASYYWAFDKSKDMPAFPLCASLGRSLRYHTGS. Residues 499–519 traverse the membrane as a helical segment; that stretch reads LAFGSLLLAIVQVIRVLLEYI. Residues 520 to 593 lie on the Extracellular side of the membrane; the sequence is DHKLKGAENK…RVVVLDKVTD (74 aa). A helical transmembrane segment spans residues 594 to 614; the sequence is FILFLGKLLIVGLVGIFAFFF. At 615 to 632 the chain is on the cytoplasmic side; the sequence is FSGQTDAFKGTAPSLHYY. The helical transmembrane segment at 633–653 threads the bilayer; sequence WVPILTVLVCSYLIAHGFFSV. At 654–697 the chain is on the extracellular side; that stretch reads YAMCVDTLFLCFLEDLERNDGSAERPYLMSENLLNVLKKKNQAN.

This sequence belongs to the CTL (choline transporter-like) family.

The protein localises to the cell membrane. The protein resides in the mitochondrion outer membrane. It catalyses the reaction choline(out) + n H(+)(in) = choline(in) + n H(+)(out). It carries out the reaction ethanolamine(out) + n H(+)(in) = ethanolamine(in) + n H(+)(out). In terms of biological role, choline/H+ antiporter, mainly in mitochodria. Also acts as a low-affinity ethanolamine/H+ antiporter, regulating the supply of extracellular ethanolamine (Etn) for the CDP-Etn pathway, redistribute intracellular Etn and balance the CDP-Cho and CDP-Etn arms of the Kennedy pathway. In Danio rerio (Zebrafish), this protein is Choline transporter-like protein 2 (slc44a2).